The sequence spans 175 residues: Small ribosomal subunit protein uS5 (175 aa).

Residues 11–74 enclose the S5 DRBM domain; the sequence is LSEVLVDVNR…QAAKKRMMKV (64 aa).

The protein belongs to the universal ribosomal protein uS5 family. As to quaternary structure, part of the 30S ribosomal subunit. Contacts proteins S4 and S8.

Its function is as follows. With S4 and S12 plays an important role in translational accuracy. Located at the back of the 30S subunit body where it stabilizes the conformation of the head with respect to the body. The chain is Small ribosomal subunit protein uS5 from Rickettsia typhi (strain ATCC VR-144 / Wilmington).